Here is a 369-residue protein sequence, read N- to C-terminus: Flagellar P-ring protein (369 aa).

An N-terminal signal peptide occupies residues 1-22 (MFNARRLIAATLLMSCAFGAHA).

Belongs to the FlgI family. As to quaternary structure, the basal body constitutes a major portion of the flagellar organelle and consists of four rings (L,P,S, and M) mounted on a central rod.

The protein localises to the periplasm. The protein resides in the bacterial flagellum basal body. Functionally, assembles around the rod to form the L-ring and probably protects the motor/basal body from shearing forces during rotation. The chain is Flagellar P-ring protein from Pseudomonas entomophila (strain L48).